A 185-amino-acid chain; its full sequence is UPF0200 protein Mevan_0592 (185 aa).

Residue 8 to 15 (GMPGSGKS) participates in ATP binding.

It belongs to the UPF0200 family.

The protein is UPF0200 protein Mevan_0592 of Methanococcus vannielii (strain ATCC 35089 / DSM 1224 / JCM 13029 / OCM 148 / SB).